The sequence spans 472 residues: Siroheme synthase (472 aa).

Positions 1-204 (MDYLPIFTKL…GQTEKAIALM (204 aa)) are precorrin-2 dehydrogenase /sirohydrochlorin ferrochelatase. NAD(+) is bound by residues 22-23 (SI) and 43-44 (LE). Serine 128 bears the Phosphoserine mark. The tract at residues 215–472 (GDVALVGAGP…SRDPFLVNLA (258 aa)) is uroporphyrinogen-III C-methyltransferase. Position 224 (proline 224) interacts with S-adenosyl-L-methionine. The Proton acceptor role is filled by aspartate 247. Residue lysine 269 is the Proton donor of the active site. S-adenosyl-L-methionine contacts are provided by residues 300 to 302 (GGD), isoleucine 305, 330 to 331 (TA), methionine 382, and glycine 411.

The protein in the N-terminal section; belongs to the precorrin-2 dehydrogenase / sirohydrochlorin ferrochelatase family. It in the C-terminal section; belongs to the precorrin methyltransferase family.

It carries out the reaction uroporphyrinogen III + 2 S-adenosyl-L-methionine = precorrin-2 + 2 S-adenosyl-L-homocysteine + H(+). The enzyme catalyses precorrin-2 + NAD(+) = sirohydrochlorin + NADH + 2 H(+). The catalysed reaction is siroheme + 2 H(+) = sirohydrochlorin + Fe(2+). It participates in cofactor biosynthesis; adenosylcobalamin biosynthesis; precorrin-2 from uroporphyrinogen III: step 1/1. Its pathway is cofactor biosynthesis; adenosylcobalamin biosynthesis; sirohydrochlorin from precorrin-2: step 1/1. It functions in the pathway porphyrin-containing compound metabolism; siroheme biosynthesis; precorrin-2 from uroporphyrinogen III: step 1/1. The protein operates within porphyrin-containing compound metabolism; siroheme biosynthesis; siroheme from sirohydrochlorin: step 1/1. It participates in porphyrin-containing compound metabolism; siroheme biosynthesis; sirohydrochlorin from precorrin-2: step 1/1. Functionally, multifunctional enzyme that catalyzes the SAM-dependent methylations of uroporphyrinogen III at position C-2 and C-7 to form precorrin-2 via precorrin-1. Then it catalyzes the NAD-dependent ring dehydrogenation of precorrin-2 to yield sirohydrochlorin. Finally, it catalyzes the ferrochelation of sirohydrochlorin to yield siroheme. The polypeptide is Siroheme synthase (Psychromonas ingrahamii (strain DSM 17664 / CCUG 51855 / 37)).